The primary structure comprises 640 residues: 1-deoxy-D-xylulose-5-phosphate synthase (640 aa).

Residues histidine 79 and 120–122 (AHS) contribute to the thiamine diphosphate site. Mg(2+) is bound at residue aspartate 151. Residues 152–153 (GA), asparagine 180, tyrosine 289, and glutamate 371 each bind thiamine diphosphate. Position 180 (asparagine 180) interacts with Mg(2+).

Belongs to the transketolase family. DXPS subfamily. In terms of assembly, homodimer. Requires Mg(2+) as cofactor. The cofactor is thiamine diphosphate.

It catalyses the reaction D-glyceraldehyde 3-phosphate + pyruvate + H(+) = 1-deoxy-D-xylulose 5-phosphate + CO2. It functions in the pathway metabolic intermediate biosynthesis; 1-deoxy-D-xylulose 5-phosphate biosynthesis; 1-deoxy-D-xylulose 5-phosphate from D-glyceraldehyde 3-phosphate and pyruvate: step 1/1. In terms of biological role, catalyzes the acyloin condensation reaction between C atoms 2 and 3 of pyruvate and glyceraldehyde 3-phosphate to yield 1-deoxy-D-xylulose-5-phosphate (DXP). The protein is 1-deoxy-D-xylulose-5-phosphate synthase of Novosphingobium aromaticivorans (strain ATCC 700278 / DSM 12444 / CCUG 56034 / CIP 105152 / NBRC 16084 / F199).